The chain runs to 1709 residues: Sialoadhesin (1709 aa).

Positions 1–19 (MGFLPKLLLLASFFPAGQA) are cleaved as a signal peptide. An Ig-like V-type domain is found at 20 to 136 (SWGVSSPQDV…DVKGTLVTVT (117 aa)). Over 20 to 1641 (SWGVSSPQDV…ALHRLHQFQQ (1622 aa)) the chain is Extracellular. 4 cysteine pairs are disulfide-bonded: cysteine 36-cysteine 166, cysteine 41-cysteine 98, cysteine 160-cysteine 217, and cysteine 262-cysteine 305. N-acetylneuraminate is bound by residues tyrosine 63, arginine 116, and 122–126 (VNRWS). Ig-like C2-type domains follow at residues 139–233 (PRVP…IHLQ), 238–320 (PKGV…PPIS), 326–405 (AEVQ…GPVS), 411–507 (PPLT…LDFH), 511–593 (ARLL…AVLT), 601–705 (PTFT…ATFN), 708–785 (ATVL…AQLS), 799–894 (PKLS…FQVR), 898–977 (VQVS…APIS), 984–1083 (PRHV…ADFD), 1085–1165 (QAVN…RPIT), and 1176–1248 (RLTY…SPLG). Residue asparagine 159 is glycosylated (N-linked (GlcNAc...) asparagine). Asparagine 265 and asparagine 339 each carry an N-linked (GlcNAc...) asparagine glycan. 2 disulfides stabilise this stretch: cysteine 346-cysteine 390 and cysteine 433-cysteine 491. Asparagine 499 carries an N-linked (GlcNAc...) asparagine glycan. Cystine bridges form between cysteine 531-cysteine 575 and cysteine 624-cysteine 689. N-linked (GlcNAc...) asparagine glycosylation is found at asparagine 697, asparagine 726, asparagine 730, and asparagine 741. Cystine bridges form between cysteine 729/cysteine 774 and cysteine 817/cysteine 876. Asparagine 886 carries an N-linked (GlcNAc...) asparagine glycan. Disulfide bonds link cysteine 916–cysteine 960 and cysteine 1005–cysteine 1067. N-linked (GlcNAc...) asparagine glycosylation is found at asparagine 1104 and asparagine 1138. 2 disulfide bridges follow: cysteine 1107–cysteine 1149 and cysteine 1193–cysteine 1241. Asparagine 1251 carries N-linked (GlcNAc...) asparagine glycosylation. Ig-like C2-type domains are found at residues 1259–1341 (EGVR…AALQ), 1350–1442 (VLSS…RLQV), 1445–1528 (ARVV…VMLR), and 1536–1631 (PTMM…FGVR). 2 disulfide bridges follow: cysteine 1281–cysteine 1324 and cysteine 1367–cysteine 1425. N-linked (GlcNAc...) asparagine glycosylation is found at asparagine 1462 and asparagine 1476. Intrachain disulfides connect cysteine 1465–cysteine 1511 and cysteine 1554–cysteine 1613. The chain crosses the membrane as a helical span at residues 1642–1662 (LLWVLGLLVGLLLLLLGLGAC). Residues 1663-1709 (YTWRRRRVCKQSMGENSVEMAFQKETTQLIDPDAATCETSTCAPPLG) lie on the Cytoplasmic side of the membrane.

This sequence belongs to the immunoglobulin superfamily. SIGLEC (sialic acid binding Ig-like lectin) family. In terms of assembly, interacts with TYROBP. Interacts with CLEC10A. In terms of tissue distribution, expressed by macrophages in various tissues. High levels are found in spleen, lymph node, perivascular macrophages in brain and lower levels in bone marrow, liver Kupffer cells and lamina propria of colon and lung. Also expressed by inflammatory macrophages in rheumatoid arthritis.

It is found in the cell membrane. Its subcellular location is the secreted. Functionally, macrophage-restricted adhesion molecule that mediates sialic-acid dependent binding to lymphocytes, including granulocytes, monocytes, natural killer cells, B-cells and CD8 T-cells. Plays a crucial role in limiting bacterial dissemination by engaging sialylated bacteria to promote effective phagocytosis and antigen presentation for the adaptive immune response. Mediates the uptake of various enveloped viruses via sialic acid recognition and subsequently induces the formation of intracellular compartments filled with virions (VCCs). In turn, enhances macrophage-to-T-cell transmission of several viruses including HIV-1 or SARS-CoV-2. Acts as an endocytic receptor mediating clathrin dependent endocytosis. Preferentially binds to alpha-2,3-linked sialic acid. Binds to SPN/CD43 on T-cells. May play a role in hemopoiesis. Plays a role in the inhibition of antiviral innate immune by promoting TBK1 degradation via TYROBP and TRIM27-mediated ubiquitination. (Microbial infection) Facilitates viral cytoplasmic entry into activated dendritic cells via recognition of sialylated gangliosides pesent on viral membrane. The sequence is that of Sialoadhesin (SIGLEC1) from Homo sapiens (Human).